Here is a 626-residue protein sequence, read N- to C-terminus: UvrABC system protein C (626 aa).

In terms of domain architecture, GIY-YIG spans 20–97 (ECSGVYKMLD…IKKFQPKFNI (78 aa)). The region spanning 207-242 (RELQENLSKKMQELSSQMRFEEAAEIRDRIKALSYV) is the UVR domain.

Belongs to the UvrC family. As to quaternary structure, interacts with UvrB in an incision complex.

The protein localises to the cytoplasm. Its function is as follows. The UvrABC repair system catalyzes the recognition and processing of DNA lesions. UvrC both incises the 5' and 3' sides of the lesion. The N-terminal half is responsible for the 3' incision and the C-terminal half is responsible for the 5' incision. The polypeptide is UvrABC system protein C (Rickettsia typhi (strain ATCC VR-144 / Wilmington)).